A 378-amino-acid chain; its full sequence is Heat-inducible transcription repressor HrcA (378 aa).

Belongs to the HrcA family.

Negative regulator of class I heat shock genes (grpE-dnaK-dnaJ and groELS operons). Prevents heat-shock induction of these operons. This chain is Heat-inducible transcription repressor HrcA, found in Synechocystis sp. (strain ATCC 27184 / PCC 6803 / Kazusa).